The following is a 277-amino-acid chain: Shikimate dehydrogenase (NADP(+)) (277 aa).

Shikimate is bound by residues 15 to 17 and threonine 62; that span reads SLS. The Proton acceptor role is filled by lysine 66. Shikimate contacts are provided by asparagine 87 and aspartate 102. Residues 127–131, 151–156, and isoleucine 219 each bind NADP(+); these read GAGGA and NRTVDK. A shikimate-binding site is contributed by tyrosine 221. Glycine 242 provides a ligand contact to NADP(+).

The protein belongs to the shikimate dehydrogenase family. Homodimer.

The catalysed reaction is shikimate + NADP(+) = 3-dehydroshikimate + NADPH + H(+). The protein operates within metabolic intermediate biosynthesis; chorismate biosynthesis; chorismate from D-erythrose 4-phosphate and phosphoenolpyruvate: step 4/7. Functionally, involved in the biosynthesis of the chorismate, which leads to the biosynthesis of aromatic amino acids. Catalyzes the reversible NADPH linked reduction of 3-dehydroshikimate (DHSA) to yield shikimate (SA). The sequence is that of Shikimate dehydrogenase (NADP(+)) from Bacillus cereus (strain G9842).